The following is a 503-amino-acid chain: Cytochrome P450 3A13 (503 aa).

Heme is bound at residue Cys442.

It belongs to the cytochrome P450 family. Heme is required as a cofactor.

Its subcellular location is the endoplasmic reticulum membrane. The protein localises to the microsome membrane. It carries out the reaction an organic molecule + reduced [NADPH--hemoprotein reductase] + O2 = an alcohol + oxidized [NADPH--hemoprotein reductase] + H2O + H(+). Its function is as follows. Can activate aflatoxin B1 to a genotoxic product. The protein is Cytochrome P450 3A13 (Cyp3a13) of Mus musculus (Mouse).